Here is a 502-residue protein sequence, read N- to C-terminus: L-arabinose isomerase (502 aa).

Mn(2+) contacts are provided by E307, E334, H351, and H450.

This sequence belongs to the arabinose isomerase family. Mn(2+) is required as a cofactor.

The enzyme catalyses beta-L-arabinopyranose = L-ribulose. It functions in the pathway carbohydrate degradation; L-arabinose degradation via L-ribulose; D-xylulose 5-phosphate from L-arabinose (bacterial route): step 1/3. Catalyzes the conversion of L-arabinose to L-ribulose. The protein is L-arabinose isomerase of Nocardioides sp. (strain ATCC BAA-499 / JS614).